We begin with the raw amino-acid sequence, 482 residues long: Proline--tRNA ligase (482 aa).

Residues Thr117, Glu119, and Arg148 each contribute to the L-proline site. Residues Arg148, Glu150, Gln232, and Thr235 each coordinate ATP. Residue His237 coordinates L-proline. Position 269 (Ser269) interacts with ATP. Positions 346–376 are interaction with tRNA; sequence EMRGVPLRVEIGPRDLEKGAAVISRRDTGEK. Residues Cys436, Cys441, Cys464, and Cys467 each contribute to the Zn(2+) site.

It belongs to the class-II aminoacyl-tRNA synthetase family. ProS type 3 subfamily. Homodimer. The dimer is functionally asymmetric: only one of the two active sites at a time is able to form prolyl-adenylate, and only one tRNA molecule binds per dimer. Interacts with LeuRS, which enhances tRNA(Pro) aminoacylation.

It is found in the cytoplasm. It catalyses the reaction tRNA(Pro) + L-proline + ATP = L-prolyl-tRNA(Pro) + AMP + diphosphate. Its function is as follows. Catalyzes the attachment of proline to tRNA(Pro) in a two-step reaction: proline is first activated by ATP to form Pro-AMP and then transferred to the acceptor end of tRNA(Pro). Can inadvertently accommodate and process cysteine. This Methanothermobacter thermautotrophicus (strain ATCC 29096 / DSM 1053 / JCM 10044 / NBRC 100330 / Delta H) (Methanobacterium thermoautotrophicum) protein is Proline--tRNA ligase (proS).